Reading from the N-terminus, the 363-residue chain is S-methylmethionine--homocysteine S-methyltransferase BHMT2 (363 aa).

The 295-residue stretch at 11–305 (RGILERLESG…YHIRAIAEEL (295 aa)) folds into the Hcy-binding domain. Cysteine 208, cysteine 290, and cysteine 291 together coordinate Zn(2+). A Phosphoserine modification is found at serine 321.

As to quaternary structure, homotetramer. It depends on Zn(2+) as a cofactor.

The catalysed reaction is S-methyl-L-methionine + L-homocysteine = 2 L-methionine + H(+). The protein operates within amino-acid biosynthesis; L-methionine biosynthesis via de novo pathway; L-methionine from L-homocysteine (BhmT route): step 1/1. In terms of biological role, involved in the regulation of homocysteine metabolism. Converts betaine and homocysteine to dimethylglycine and methionine, respectively. This reaction is also required for the irreversible oxidation of choline. The polypeptide is S-methylmethionine--homocysteine S-methyltransferase BHMT2 (BHMT2) (Pongo abelii (Sumatran orangutan)).